A 137-amino-acid polypeptide reads, in one-letter code: ATP synthase epsilon chain (137 aa).

The protein belongs to the ATPase epsilon chain family. In terms of assembly, F-type ATPases have 2 components, CF(1) - the catalytic core - and CF(0) - the membrane proton channel. CF(1) has five subunits: alpha(3), beta(3), gamma(1), delta(1), epsilon(1). CF(0) has three main subunits: a, b and c.

Its subcellular location is the cell membrane. Functionally, produces ATP from ADP in the presence of a proton gradient across the membrane. The protein is ATP synthase epsilon chain of Desulforudis audaxviator (strain MP104C).